Consider the following 309-residue polypeptide: Anamorsin homolog (309 aa).

The interval Val4–Leu169 is N-terminal SAM-like domain. The linker stretch occupies residues Thr170–Leu218. [2Fe-2S] cluster is bound by residues Cys230, Cys242, Cys245, and Cys247. A fe-S binding site A region spans residues Cys230–Cys247. [4Fe-4S] cluster is bound by residues Cys270, Cys273, Cys281, and Cys284. Short sequence motifs (cx2C motif) lie at residues Cys270 to Cys273 and Cys281 to Cys284. Positions Cys270–Cys284 are fe-S binding site B.

This sequence belongs to the anamorsin family. As to quaternary structure, monomer. [2Fe-2S] cluster is required as a cofactor. [4Fe-4S] cluster serves as cofactor.

The protein resides in the cytoplasm. It localises to the mitochondrion intermembrane space. Its function is as follows. Component of the cytosolic iron-sulfur (Fe-S) protein assembly (CIA) machinery. Required for the maturation of extramitochondrial Fe-S proteins. Part of an electron transfer chain functioning in an early step of cytosolic Fe-S biogenesis, facilitating the de novo assembly of a [4Fe-4S] cluster on the cytosolic Fe-S scaffold complex. Electrons are transferred from NADPH via a FAD- and FMN-containing diflavin oxidoreductase. Together with the diflavin oxidoreductase, also required for the assembly of the diferric tyrosyl radical cofactor of ribonucleotide reductase (RNR), probably by providing electrons for reduction during radical cofactor maturation in the catalytic small subunit. The polypeptide is Anamorsin homolog (Branchiostoma floridae (Florida lancelet)).